We begin with the raw amino-acid sequence, 258 residues long: Type III pantothenate kinase (258 aa).

6–13 (DVGNTNTV) serves as a coordination point for ATP. Substrate is bound by residues Tyr-100 and 107–110 (GADR). The active-site Proton acceptor is the Asp-109. Asp-129 serves as a coordination point for K(+). Thr-132 provides a ligand contact to ATP. Substrate is bound at residue Thr-184.

Belongs to the type III pantothenate kinase family. Homodimer. NH4(+) serves as cofactor. The cofactor is K(+).

The protein localises to the cytoplasm. The enzyme catalyses (R)-pantothenate + ATP = (R)-4'-phosphopantothenate + ADP + H(+). Its pathway is cofactor biosynthesis; coenzyme A biosynthesis; CoA from (R)-pantothenate: step 1/5. In terms of biological role, catalyzes the phosphorylation of pantothenate (Pan), the first step in CoA biosynthesis. The chain is Type III pantothenate kinase from Geobacillus sp. (strain WCH70).